A 1412-amino-acid chain; its full sequence is DNA-directed RNA polymerase subunit beta' (1412 aa).

Cysteine 70, cysteine 72, cysteine 85, and cysteine 88 together coordinate Zn(2+). Residues aspartate 460, aspartate 462, and aspartate 464 each coordinate Mg(2+). The Zn(2+) site is built by cysteine 819, cysteine 893, cysteine 900, and cysteine 903. Residues 1393 to 1412 form a disordered region; it reads EAFEFGTPSAPAEEPQHPAE.

It belongs to the RNA polymerase beta' chain family. The RNAP catalytic core consists of 2 alpha, 1 beta, 1 beta' and 1 omega subunit. When a sigma factor is associated with the core the holoenzyme is formed, which can initiate transcription. The cofactor is Mg(2+). It depends on Zn(2+) as a cofactor.

It carries out the reaction RNA(n) + a ribonucleoside 5'-triphosphate = RNA(n+1) + diphosphate. Its function is as follows. DNA-dependent RNA polymerase catalyzes the transcription of DNA into RNA using the four ribonucleoside triphosphates as substrates. The sequence is that of DNA-directed RNA polymerase subunit beta' from Burkholderia pseudomallei (strain 1106a).